Reading from the N-terminus, the 314-residue chain is tRNA pseudouridine synthase B (314 aa).

Residue D54 is the Nucleophile of the active site.

The protein belongs to the pseudouridine synthase TruB family. Type 1 subfamily.

It catalyses the reaction uridine(55) in tRNA = pseudouridine(55) in tRNA. Responsible for synthesis of pseudouridine from uracil-55 in the psi GC loop of transfer RNAs. This chain is tRNA pseudouridine synthase B, found in Ralstonia nicotianae (strain ATCC BAA-1114 / GMI1000) (Ralstonia solanacearum).